A 203-amino-acid chain; its full sequence is Urease accessory protein UreG (203 aa).

14 to 21 (GPVGSGKT) serves as a coordination point for GTP.

Belongs to the SIMIBI class G3E GTPase family. UreG subfamily. In terms of assembly, homodimer. UreD, UreF and UreG form a complex that acts as a GTP-hydrolysis-dependent molecular chaperone, activating the urease apoprotein by helping to assemble the nickel containing metallocenter of UreC. The UreE protein probably delivers the nickel.

It localises to the cytoplasm. Functionally, facilitates the functional incorporation of the urease nickel metallocenter. This process requires GTP hydrolysis, probably effectuated by UreG. The chain is Urease accessory protein UreG from Rhizobium etli (strain CIAT 652).